Consider the following 83-residue polypeptide: Large ribosomal subunit protein eL43 (83 aa).

Zn(2+) is bound by residues Cys38, Cys41, Cys56, and Cys59. Residues Cys38–Cys59 form a C4-type zinc finger.

It belongs to the eukaryotic ribosomal protein eL43 family. Putative zinc-binding subfamily. In terms of assembly, part of the 50S ribosomal subunit. Zn(2+) is required as a cofactor.

Its function is as follows. Binds to the 23S rRNA. The sequence is that of Large ribosomal subunit protein eL43 from Archaeoglobus fulgidus (strain ATCC 49558 / DSM 4304 / JCM 9628 / NBRC 100126 / VC-16).